We begin with the raw amino-acid sequence, 264 residues long: Probable glycerophosphodiester phosphodiesterase 2 (264 aa).

One can recognise a GP-PDE domain in the interval 17 to 255 (RIAMAHRGFT…DRADLLRDVL (239 aa)). His-22 (proton acceptor) is an active-site residue. A divalent metal cation is bound by residues Glu-50, Asp-52, and His-65. Catalysis depends on His-65, which acts as the Proton donor.

This sequence belongs to the glycerophosphoryl diester phosphodiesterase family. A divalent metal cation is required as a cofactor.

It carries out the reaction a sn-glycero-3-phosphodiester + H2O = an alcohol + sn-glycerol 3-phosphate + H(+). Its function is as follows. Glycerophosphodiester phosphodiesterase hydrolyzes glycerophosphodiesters into glycerol-3-phosphate (G3P) and the corresponding alcohol. In Mycobacterium tuberculosis (strain ATCC 25618 / H37Rv), this protein is Probable glycerophosphodiester phosphodiesterase 2.